We begin with the raw amino-acid sequence, 443 residues long: Tubulin beta chain (443 aa).

8 residues coordinate GTP: Gln-11, Glu-69, Ser-138, Gly-142, Thr-143, Gly-144, Asn-204, and Asn-226. Glu-69 is a binding site for Mg(2+). A disordered region spans residues 421 to 443 (EYQQYQDASAEEEGEFGEEEEEN). The span at 429 to 443 (SAEEEGEFGEEEEEN) shows a compositional bias: acidic residues.

It belongs to the tubulin family. As to quaternary structure, dimer of alpha and beta chains. A typical microtubule is a hollow water-filled tube with an outer diameter of 25 nm and an inner diameter of 15 nM. Alpha-beta heterodimers associate head-to-tail to form protofilaments running lengthwise along the microtubule wall with the beta-tubulin subunit facing the microtubule plus end conferring a structural polarity. Microtubules usually have 13 protofilaments but different protofilament numbers can be found in some organisms and specialized cells. Mg(2+) serves as cofactor.

Its subcellular location is the cytoplasm. It localises to the cytoskeleton. Tubulin is the major constituent of microtubules, a cylinder consisting of laterally associated linear protofilaments composed of alpha- and beta-tubulin heterodimers. Microtubules grow by the addition of GTP-tubulin dimers to the microtubule end, where a stabilizing cap forms. Below the cap, tubulin dimers are in GDP-bound state, owing to GTPase activity of alpha-tubulin. The protein is Tubulin beta chain (TUBB1) of Polytomella agilis (Quadriflagellate alga).